Consider the following 134-residue polypeptide: Small ribosomal subunit protein uS11 (134 aa).

Residues Thr-114–Arg-134 are disordered. Residues Pro-123 to Arg-134 are compositionally biased toward basic residues.

Belongs to the universal ribosomal protein uS11 family. As to quaternary structure, part of the 30S ribosomal subunit. Interacts with proteins S7 and S18. Binds to IF-3.

Located on the platform of the 30S subunit, it bridges several disparate RNA helices of the 16S rRNA. Forms part of the Shine-Dalgarno cleft in the 70S ribosome. In Mesomycoplasma hyopneumoniae (strain 232) (Mycoplasma hyopneumoniae), this protein is Small ribosomal subunit protein uS11.